Reading from the N-terminus, the 866-residue chain is DNA topoisomerase 3-beta (866 aa).

Positions 4 to 149 (TVLMVAEKPS…RIFRAKFSSV (146 aa)) constitute a Toprim domain. Mg(2+) contacts are provided by Glu10, Asp114, and Asp116. In terms of domain architecture, Topo IA-type catalytic spans 165-585 (SKDEALAVDA…HVLQQFMKKY (421 aa)). The segment at 207–212 (SYGPCQ) is interaction with DNA. The active-site O-(5'-phospho-DNA)-tyrosine intermediate is Tyr329. Basic residues predominate over residues 830 to 853 (MRRGRGRGRGRGRGRGSSRGRRGS). A disordered region spans residues 830–866 (MRRGRGRGRGRGRGRGSSRGRRGSSRHDDPKMSFRDF). Over residues 854–866 (SRHDDPKMSFRDF) the composition is skewed to basic and acidic residues.

This sequence belongs to the type IA topoisomerase family. Requires Mg(2+) as cofactor.

The enzyme catalyses ATP-independent breakage of single-stranded DNA, followed by passage and rejoining.. Its function is as follows. Releases the supercoiling and torsional tension of DNA introduced during the DNA replication and transcription by transiently cleaving and rejoining one strand of the DNA duplex. Introduces a single-strand break via transesterification at a target site in duplex DNA. The scissile phosphodiester is attacked by the catalytic tyrosine of the enzyme, resulting in the formation of a DNA-(5'-phosphotyrosyl)-enzyme intermediate and the expulsion of a 3'-OH DNA strand. The free DNA strand than undergoes passage around the unbroken strand thus removing DNA supercoils. Finally, in the religation step, the DNA 3'-OH attacks the covalent intermediate to expel the active-site tyrosine and restore the DNA phosphodiester backbone. This is DNA topoisomerase 3-beta (TOP3B) from Oryza sativa subsp. japonica (Rice).